Consider the following 76-residue polypeptide: uncharacterized protein (76 aa).

A disordered region spans residues Ser27–Leu76.

This is an uncharacterized protein from Caenorhabditis elegans.